The sequence spans 843 residues: MAKPLTDSERQKQISVRGIAGLGDVAEVRKSFNRHLHFTLVKDRNVATPRDYFFALAHTVRDHLVGRWIRTQQHYYERDPKRIYYLSLEFYMGRTLQNTMVNLGLQTACDEATYQLGLDLEELEEIEEDAGLGNGGLGRLAACFLDSMATLGLAAYGYGIRYEFGIFNQKIVNGWQVEEADDWLRYGNPWEKARPEYMLPVHFYGRVEHTPDGVLWLDTQVVLAMPYDTPVPGYKNNTVNTMRLWSAKAPNDFKLKDFNVGDYIEAVLDRNLAENISRVLYPNDNFFEGKELRLKQEYFVVAATLQDIIRRFKSSRFGCRDPVRTCFETFPDKVAIQLNDTHPALSIPELMRILVDVEKVDWDKAWEITKKTCAYTNHTVLPEALERWPVSMFEKLLPRHLEIIYAINQRHLDHVAALFPGDVDRLRRMSVIEEGDCKRINMAHLCVIGSHAVNGVARIHSEIVKQSVFKDFYELEPEKFQNKTNGITPRRWLLLCNPGLAEIIVERIGEGFLTDLSQLKKLLSLVDDEAFIRDVAKVKQENKLKFSAQLEKEYKVKINPASMFDVHVKRIHEYKRQLLNCLHIITLYNRIKKDPAKAFVPRTVMIGGKAAPGYHMAKMIIKLVTSIGDVVNHDPVVGDRLRVIFLENYRVSLAEKVIPAADLSQQISTAGTEASGTGNMKFMLNGALTIGTMDGANVEMAEEAGEENLFIFGMRVEDVEALDQKGYNAREFYERLPELRQAVDQISSGFFSPKDPDCFKDVVNMLMYHDRFKVFADYEAYIQCQAQVDRLYRNSKEWTKKVIRNIACSGKFSSDRTITEYAREIWGVEPSDLQIPPPNLPKD.

Ala2 is modified (N-acetylalanine). Ser15 carries the post-translational modification Phosphoserine; by PHK; in form phosphorylase A. Positions 43, 197, and 310 each coordinate AMP. The residue at position 197 (Tyr197) is a Phosphotyrosine. At Tyr473 the chain carries Phosphotyrosine. A Phosphoserine modification is found at Ser524. Lys569 provides a ligand contact to pyridoxal 5'-phosphate. The pyridoxal 5'-phosphate stretch occupies residues 677–678 (TG). The residue at position 681 (Lys681) is an N6-(pyridoxal phosphate)lysine.

It belongs to the glycogen phosphorylase family. In terms of assembly, homodimer. Dimers associate into a tetramer to form the enzymatically active phosphorylase A. Requires pyridoxal 5'-phosphate as cofactor. Phosphorylation of Ser-15 converts phosphorylase B (unphosphorylated) to phosphorylase A.

It carries out the reaction [(1-&gt;4)-alpha-D-glucosyl](n) + phosphate = [(1-&gt;4)-alpha-D-glucosyl](n-1) + alpha-D-glucose 1-phosphate. With respect to regulation, activity of phosphorylase is controlled both by allosteric means (through the non-covalent binding of metabolites) and by covalent modification. Thus AMP allosterically activates, whereas ATP, ADP, and glucose-6-phosphate allosterically inhibit, phosphorylase B. Functionally, glycogen phosphorylase that regulates glycogen mobilization. Phosphorylase is an important allosteric enzyme in carbohydrate metabolism. Enzymes from different sources differ in their regulatory mechanisms and in their natural substrates. However, all known phosphorylases share catalytic and structural properties. In Mus musculus (Mouse), this protein is Glycogen phosphorylase, brain form (Pygb).